The primary structure comprises 319 residues: Ubiquinone biosynthesis protein COQ4, mitochondrial (319 aa).

The N-terminal 28 residues, 1 to 28, are a transit peptide targeting the mitochondrion; sequence MISRSIFSKSVSLQRSQNRSFLLTAASA. Positions 205, 206, 209, and 221 each coordinate Zn(2+).

The protein belongs to the COQ4 family. As to quaternary structure, component of a multi-subunit COQ enzyme complex, composed of at least COQ3, COQ4, COQ5, COQ6, COQ7 and COQ9. The cofactor is Zn(2+).

The protein localises to the mitochondrion inner membrane. The enzyme catalyses a 4-hydroxy-3-methoxy-5-(all-trans-polyprenyl)benzoate + H(+) = a 2-methoxy-6-(all-trans-polyprenyl)phenol + CO2. It participates in cofactor biosynthesis; ubiquinone biosynthesis. Lyase that catalyzes the C1-decarboxylation of 4-hydroxy-3-methoxy-5-(all-trans-polyprenyl)benzoic acid into 2-methoxy-6-(all-trans-polyprenyl)phenol during ubiquinone biosynthesis. The sequence is that of Ubiquinone biosynthesis protein COQ4, mitochondrial from Clavispora lusitaniae (strain ATCC 42720) (Yeast).